A 167-amino-acid chain; its full sequence is Dual specificity protein phosphatase 1B (167 aa).

The region spanning 24–165 (DLSEIQQGLF…LQQFEKSIQG (142 aa)) is the Tyrosine-protein phosphatase domain. Cysteine 109 acts as the Phosphocysteine intermediate in catalysis.

The protein belongs to the protein-tyrosine phosphatase family. Non-receptor class dual specificity subfamily. As to quaternary structure, associates with MPK3 and MPK6. Interacts with MPK6 is promoted during HR-like responses triggered by fungal elicitors, whereas interaction with MPK3 in repressed. Expressed in flowers, seedlings, roots, leaves, and seeds. Present in stomata and meristematic cells.

The protein localises to the nucleus. Its subcellular location is the cytoplasm. The catalysed reaction is O-phospho-L-tyrosyl-[protein] + H2O = L-tyrosyl-[protein] + phosphate. The enzyme catalyses O-phospho-L-seryl-[protein] + H2O = L-seryl-[protein] + phosphate. It catalyses the reaction O-phospho-L-threonyl-[protein] + H2O = L-threonyl-[protein] + phosphate. Has a dual specificity toward Ser/Thr and Tyr-containing proteins. Prevents biotic and abiotic stress responses, including ozone, oxidative stress and pathogen attacks; represses MAPK activities during hypersensitive response to limit the spread of the HR response after infection by necrotrophic pathogen such as Botrytis cinerea. May be also involved in ABA and salt responses. Dephosphorylates MPK3 and MPK6. The polypeptide is Dual specificity protein phosphatase 1B (DSPTP1B) (Arabidopsis thaliana (Mouse-ear cress)).